The following is a 461-amino-acid chain: Smoothelin-like protein 2 (461 aa).

Positions 55–88 (PLARTVADLQRDNQRLQAQLERLTRQVEALGLAS) form a coiled coil. Disordered regions lie at residues 87-193 (ASGM…LRLP) and 227-248 (LNPSPSEVITPWTPSPSEKNSS). The span at 94–107 (PGTPGTPSPPPAPG) shows a compositional bias: pro residues. Thr96 bears the Phosphothreonine mark. Residues Ser101, Ser129, and Ser134 each carry the phosphoserine modification. Residues 134–147 (SLDHDEASESEMRK) show a composition bias toward basic and acidic residues. Residues Ser256 and Ser269 each carry the phosphoserine modification. The disordered stretch occupies residues 260–307 (AVTASKHSNSPPLVTPPQSPVSPQPPAITQVHRQGERRRELVRSQTLP). A compositionally biased stretch (pro residues) spans 272–285 (LVTPPQSPVSPQPP). Residue Thr274 is modified to Phosphothreonine. Phosphoserine is present on Ser278. The segment covering 292 to 301 (RQGERRRELV) has biased composition (basic and acidic residues). Residue Ser344 is modified to Phosphoserine. The region spanning 351–458 (SSIKQILLEW…YVQSLYNHLR (108 aa)) is the Calponin-homology (CH) domain.

Belongs to the smoothelin family.

This Homo sapiens (Human) protein is Smoothelin-like protein 2 (SMTNL2).